An 89-amino-acid polypeptide reads, in one-letter code: Small ribosomal subunit protein bS20 (89 aa).

The segment at 1 to 26 (MANSPQAKKRARQNEKNRKHNASLRS) is disordered. Over residues 7-22 (AKKRARQNEKNRKHNA) the composition is skewed to basic residues.

It belongs to the bacterial ribosomal protein bS20 family.

Its function is as follows. Binds directly to 16S ribosomal RNA. In Marinobacter nauticus (strain ATCC 700491 / DSM 11845 / VT8) (Marinobacter aquaeolei), this protein is Small ribosomal subunit protein bS20.